Here is a 340-residue protein sequence, read N- to C-terminus: DNA repair protein RAD51 homolog A (340 aa).

Residues 1-14 show a composition bias toward low complexity; sequence MSSAAQQQQKAAAA. The tract at residues 1-21 is disordered; it reads MSSAAQQQQKAAAAEQEEVEH. The HhH domain occupies 49–78; the sequence is TVEAVAYTPRKDLLQIKGISEAKADKIIEA. 128–135 is a binding site for ATP; sequence GEFRSGKT.

The protein belongs to the RecA family. RAD51 subfamily. Self-associates and may interact with XRCC3 homolog. Highly expressed in mitotic and meiotic tissues, but low levels in differentiated tissues.

The protein resides in the nucleus. Binds to single and double-stranded DNA and exhibits DNA-dependent ATPase activity. Unwinds duplex DNA. Component of the meiotic recombination pathway. Seems to play a role in mediating chromosome homology search, chromosome pairing and synapsis at early stages and probably chromosome crossing-over at later stages in meiosis. Probably is involved in the repair of meiotic double strand breaks (DBSs) and in homologous recombination. The polypeptide is DNA repair protein RAD51 homolog A (RAD51A) (Zea mays (Maize)).